We begin with the raw amino-acid sequence, 73 residues long: Sec-independent protein translocase protein TatA (73 aa).

Residues M1 to G21 traverse the membrane as a helical segment. Residues M43–A73 form a disordered region.

The protein belongs to the TatA/E family. The Tat system comprises two distinct complexes: a TatABC complex, containing multiple copies of TatA, TatB and TatC subunits, and a separate TatA complex, containing only TatA subunits. Substrates initially bind to the TatABC complex, which probably triggers association of the separate TatA complex to form the active translocon.

The protein localises to the cell inner membrane. Part of the twin-arginine translocation (Tat) system that transports large folded proteins containing a characteristic twin-arginine motif in their signal peptide across membranes. TatA could form the protein-conducting channel of the Tat system. The polypeptide is Sec-independent protein translocase protein TatA (Campylobacter concisus (strain 13826)).